Here is a 390-residue protein sequence, read N- to C-terminus: Tryptophan synthase beta chain (390 aa).

Residue Lys90 is modified to N6-(pyridoxal phosphate)lysine.

Belongs to the TrpB family. As to quaternary structure, tetramer of two alpha and two beta chains. Pyridoxal 5'-phosphate is required as a cofactor.

It carries out the reaction (1S,2R)-1-C-(indol-3-yl)glycerol 3-phosphate + L-serine = D-glyceraldehyde 3-phosphate + L-tryptophan + H2O. Its pathway is amino-acid biosynthesis; L-tryptophan biosynthesis; L-tryptophan from chorismate: step 5/5. Its function is as follows. The beta subunit is responsible for the synthesis of L-tryptophan from indole and L-serine. The protein is Tryptophan synthase beta chain of Bacteroides fragilis (strain ATCC 25285 / DSM 2151 / CCUG 4856 / JCM 11019 / LMG 10263 / NCTC 9343 / Onslow / VPI 2553 / EN-2).